Here is an 85-residue protein sequence, read N- to C-terminus: Small ribosomal subunit protein uS17 (85 aa).

It belongs to the universal ribosomal protein uS17 family. In terms of assembly, part of the 30S ribosomal subunit.

One of the primary rRNA binding proteins, it binds specifically to the 5'-end of 16S ribosomal RNA. The polypeptide is Small ribosomal subunit protein uS17 (Acinetobacter baumannii (strain AB307-0294)).